A 585-amino-acid chain; its full sequence is Arginine--tRNA ligase (585 aa).

The 'HIGH' region signature appears at 126 to 136 (PNIAKEMHVGH).

It belongs to the class-I aminoacyl-tRNA synthetase family. In terms of assembly, monomer.

It localises to the cytoplasm. The enzyme catalyses tRNA(Arg) + L-arginine + ATP = L-arginyl-tRNA(Arg) + AMP + diphosphate. The sequence is that of Arginine--tRNA ligase from Trichodesmium erythraeum (strain IMS101).